The sequence spans 172 residues: Protein GrpE (172 aa).

Residues 1–23 (MNQDHPECDSEELTQNSPETDPL) form a disordered region.

Belongs to the GrpE family. In terms of assembly, homodimer.

It is found in the cytoplasm. In terms of biological role, participates actively in the response to hyperosmotic and heat shock by preventing the aggregation of stress-denatured proteins, in association with DnaK and GrpE. It is the nucleotide exchange factor for DnaK and may function as a thermosensor. Unfolded proteins bind initially to DnaJ; upon interaction with the DnaJ-bound protein, DnaK hydrolyzes its bound ATP, resulting in the formation of a stable complex. GrpE releases ADP from DnaK; ATP binding to DnaK triggers the release of the substrate protein, thus completing the reaction cycle. Several rounds of ATP-dependent interactions between DnaJ, DnaK and GrpE are required for fully efficient folding. The polypeptide is Protein GrpE (Xylella fastidiosa (strain 9a5c)).